The chain runs to 232 residues: Chaperone protein CssC (232 aa).

A signal peptide spans 1-20 (MKSKLIILLTLVPFSSFSTG).

This sequence belongs to the periplasmic pilus chaperone family.

Its subcellular location is the periplasm. Involved in the biogenesis of the CS6 fimbria. The protein is Chaperone protein CssC (cssC) of Escherichia coli.